A 320-amino-acid polypeptide reads, in one-letter code: MIDFRPFYQQIATTNLSAWLETLPLQLKQWEKTTHGDYAKWAKIVDFMPNSTACINLKDKVESIPHTPLSVGETKQLTHHLKQLMPWRKGPYHLHGIHIDTEWRSDFKWDRVLPHLAPLKDRTILDVGCGSGYHMWRMVGEGAKMVVGIDPTELFLCQFEVVRKLLGNDRRANLIPLGIEQMQPLAAFDTVFSMGVLYHRKSPLDHLLQLKAQLVKGGELVLETLVIDGDVNTCLVPADRYAKMKNVYFIPSIDCLINWLEKVGFKNVRCVDQAVTTLEEQRKTDWLENESLVDFLDPNDHSKTIEGYPAPKRAVILANA.

Carboxy-S-adenosyl-L-methionine contacts are provided by residues Lys89, Trp103, Lys108, Gly128, 150 to 152 (DPT), 179 to 180 (IE), Met194, Tyr198, and Arg313.

This sequence belongs to the class I-like SAM-binding methyltransferase superfamily. CmoB family. As to quaternary structure, homotetramer.

The catalysed reaction is carboxy-S-adenosyl-L-methionine + 5-hydroxyuridine(34) in tRNA = 5-carboxymethoxyuridine(34) in tRNA + S-adenosyl-L-homocysteine + H(+). Catalyzes carboxymethyl transfer from carboxy-S-adenosyl-L-methionine (Cx-SAM) to 5-hydroxyuridine (ho5U) to form 5-carboxymethoxyuridine (cmo5U) at position 34 in tRNAs. The protein is tRNA U34 carboxymethyltransferase of Actinobacillus pleuropneumoniae serotype 7 (strain AP76).